We begin with the raw amino-acid sequence, 325 residues long: MSAKTVQGRNGKKPASPAVNLIAGGGAGMMEALVCHPLDTIKVRMQLSRRARAPGVKPRGFVATGVEIVKKETAMGLYKGLGAVLGGIIPKMAIRFTSYESYKQMLADKETGAVTSKATFLAGLAAGVTEAVAVVNPMEVVKIRLQAQHHSLADPLDTPKYRSAPHALFTVIKEEGFSTLYRGVSLTALRQGTNQAANFTAYTELKAFLQRVQPEYSNTQLPSYQTTFIGLISGAVGPFSNAPIDTIKTRLQKTRAEPGQSAVSRIMVIAKDMFKQEGARAFYKGITPRVMRVAPGQAVTFTVYEFLKGKLENSGWAFVGGNYEE.

3 Solcar repeats span residues 15–105, 117–208, and 221–310; these read ASPA…YKQM, KATF…LKAF, and LPSY…LKGK. The next 6 helical transmembrane spans lie at 21–41, 82–102, 121–141, 187–207, 221–241, and 282–303; these read LIAG…LDTI, GAVL…YESY, LAGL…MEVV, TALR…ELKA, LPSY…PFSN, and FYKG…TFTV.

Belongs to the mitochondrial carrier (TC 2.A.29) family.

It localises to the mitochondrion inner membrane. In terms of biological role, mitochondrial transporter that does not mediate citrate export from mitochondria to cytoplasm. Its exact function has still to be determined. The polypeptide is Mitochondrial citrate transporter C (Aspergillus niger (strain ATCC 1015 / CBS 113.46 / FGSC A1144 / LSHB Ac4 / NCTC 3858a / NRRL 328 / USDA 3528.7)).